A 638-amino-acid chain; its full sequence is ATP-dependent zinc metalloprotease FtsH (638 aa).

The Cytoplasmic portion of the chain corresponds to 1–11; the sequence is MSQKGKNKKWR. A helical transmembrane segment spans residues 12–32; sequence SAGLYALLAIVLISLATTFLG. At 33–114 the chain is on the lumenal side; that stretch reads NRPPERLEIS…LAVRPVQEEG (82 aa). Residues 115 to 135 form a helical membrane-spanning segment; the sequence is LLGRILSTFFLPVLLLLGLFF. Over 136–638 the chain is Cytoplasmic; it reads LLRRAQNGPG…TLPMAVNAGA (503 aa). An ATP-binding site is contributed by 209-216; that stretch reads GPPGTGKT. A Zn(2+)-binding site is contributed by H431. Residue E432 is part of the active site. Zn(2+) contacts are provided by H435 and D510.

The protein in the central section; belongs to the AAA ATPase family. It in the C-terminal section; belongs to the peptidase M41 family. In terms of assembly, homohexamer. Zn(2+) serves as cofactor.

The protein resides in the cellular thylakoid membrane. Its function is as follows. Acts as a processive, ATP-dependent zinc metallopeptidase for both cytoplasmic and membrane proteins. Plays a role in the quality control of integral membrane proteins. This is ATP-dependent zinc metalloprotease FtsH from Synechococcus sp. (strain JA-2-3B'a(2-13)) (Cyanobacteria bacterium Yellowstone B-Prime).